A 314-amino-acid polypeptide reads, in one-letter code: Olfactory receptor 5B3 (314 aa).

Over 1 to 23 the chain is Extracellular; it reads MENKTEVTQFILLGLTNDSELQV. N-linked (GlcNAc...) asparagine glycans are attached at residues asparagine 3 and asparagine 17. Residues 24-44 traverse the membrane as a helical segment; it reads PLFITFPFIYIITLVGNLGII. Topologically, residues 45–52 are cytoplasmic; the sequence is VLIFWDSC. A helical transmembrane segment spans residues 53-73; the sequence is LHNPMYFFLSNLSLVDFCYSS. Residues 74–97 lie on the Extracellular side of the membrane; that stretch reads AVTPIVMAGFLIEDKVISYNACAA. A disulfide bridge links cysteine 95 with cysteine 187. A helical transmembrane segment spans residues 98-118; that stretch reads QMYIFVAFATVENYLLASMAY. Residues 119-131 lie on the Cytoplasmic side of the membrane; it reads DRYAAVCKPLHYT. The helical transmembrane segment at 132–152 threads the bilayer; that stretch reads TTMTTTVCARLAIGSYLCGFL. An N-linked (GlcNAc...) asparagine glycan is attached at asparagine 153. Residues 153–194 lie on the Extracellular side of the membrane; sequence NASIHTGDTFSLSFCKSNEVHHFFCDIPAVMVLSCSDRHISE. A helical transmembrane segment spans residues 195 to 215; the sequence is LVLIYVVSFNIFIALLVILIS. Residues 216–235 are Cytoplasmic-facing; it reads YTFIFITILKMHSASVYQKP. The chain crosses the membrane as a helical span at residues 236-256; the sequence is LSTCASHFIAVGIFYGTIIFM. Residues 257-269 are Extracellular-facing; it reads YLQPSSSHSMDTD. Residues 270–290 traverse the membrane as a helical segment; that stretch reads KMAPVFYTMVIPMLNPLVYSL. Residues 291–314 are Cytoplasmic-facing; that stretch reads RNKEVKSAFKKVVEKAKLSVGWSV.

This sequence belongs to the G-protein coupled receptor 1 family.

The protein localises to the cell membrane. In terms of biological role, odorant receptor. This chain is Olfactory receptor 5B3 (OR5B3), found in Homo sapiens (Human).